Reading from the N-terminus, the 487-residue chain is GTPase Der (487 aa).

Residues 2-166 (LKIAILGRPN…RIKLVANLPE (165 aa)) form the EngA-type G 1 domain. GTP-binding positions include 8–15 (GRPNVGKS), 55–59 (DTGGV), and 118–121 (NKAD). Positions 165 to 194 (PEPREEEEEGLEELSVDEHEESEAALPSNT) are disordered. Residues 168 to 187 (REEEEEGLEELSVDEHEESE) show a composition bias toward acidic residues. The 174-residue stretch at 225–398 (LKIALIGRPN…AIDELHHVVS (174 aa)) folds into the EngA-type G 2 domain. GTP is bound by residues 231 to 238 (GRPNVGKS), 278 to 282 (DTAGL), and 343 to 346 (NKWD). In terms of domain architecture, KH-like spans 399-483 (NKVPTPIVNK…PFDLEFKEKP (85 aa)).

Belongs to the TRAFAC class TrmE-Era-EngA-EngB-Septin-like GTPase superfamily. EngA (Der) GTPase family. In terms of assembly, associates with the 50S ribosomal subunit.

GTPase that plays an essential role in the late steps of ribosome biogenesis. The chain is GTPase Der from Chlamydia pneumoniae (Chlamydophila pneumoniae).